The chain runs to 8515 residues: Nonribosomal peptide synthetase 8 (8515 aa).

Adenylation regions lie at residues 59 to 736 and 1163 to 1705; these read REHH…YRCS and AKLS…EWVE. A condensation 1 region spans residues 587–1159; sequence RRVVQWLENL…TVGEVALVGD (573 aa). The Carrier 1 domain occupies 615–691; it reads EPETAMERRL…ELAPRVKVAE (77 aa). Ser-652 carries the O-(pantetheine 4'-phosphoryl)serine modification. A Carrier 2 domain is found at 1732-1808; that stretch reads RGLTPTETVI…KLGRHADHSS (77 aa). Ser-1769 carries the O-(pantetheine 4'-phosphoryl)serine modification. Positions 1830 to 2273 are epimerase 1; that stretch reads LSPIQQWFFE…TLYDCPLAAL (444 aa). A condensation 2 region spans residues 2301 to 2709; it reads SHIQEGILLS…RSPEAVLHDL (409 aa). The segment at 2733-3266 is adenylation 3; sequence QCLHWLIEQW…RMILSWLSEP (534 aa). Residues 3286 to 3362 form the Carrier 3 domain; that stretch reads TTLGPVEKQM…KVTPRTISLS (77 aa). The residue at position 3323 (Ser-3323) is an O-(pantetheine 4'-phosphoryl)serine. The interval 3406 to 3819 is condensation 3; the sequence is SPMQEGILLA…DNSGCSVKTV (414 aa). One can recognise a Carrier 4 domain in the interval 3857-3933; that stretch reads EPTNLIALTV…EVFEHARFSD (77 aa). At Ser-3894 the chain carries O-(pantetheine 4'-phosphoryl)serine. The tract at residues 3953–4392 is epimerase 2; it reads LSPIQKLHFH…TPSDFQLLSL (440 aa). A condensation 4 region spans residues 4420–4823; the sequence is PCSPMQEGIL…ARPRARLGTI (404 aa). Residues 4837-5363 form an adenylation 4 region; that stretch reads WNEQARRPVV…RKVNKWLESF (527 aa). The region spanning 5385 to 5461 is the Carrier 5 domain; the sequence is PPLTPIQQTI…SLAACATAII (77 aa). Ser-5422 bears the O-(pantetheine 4'-phosphoryl)serine mark. The tract at residues 5508-5923 is condensation 5; it reads SPMQEGILFS…SLVDHLSLCS (416 aa). Residues 5941–6459 are adenylation 5; that stretch reads ELRQCLHELI…GKVDRQALRR (519 aa). One can recognise a Carrier 6 domain in the interval 6482-6558; that stretch reads PISTAEEQQM…DLATLLESPA (77 aa). The residue at position 6519 (Ser-6519) is an O-(pantetheine 4'-phosphoryl)serine. Residues 6606-6992 are condensation 6; the sequence is CTPLQESLMA…SQMKSVMGTL (387 aa). The tract at residues 7030-7544 is adenylation 6; that stretch reads VEDLIISRAQ…SSGKLARKGV (515 aa). One can recognise a Carrier 7 domain in the interval 7575–7651; the sequence is IASSSVERAI…HLASREDLTA (77 aa). An O-(pantetheine 4'-phosphoryl)serine modification is found at Ser-7612. The segment at 7670 to 8119 is epimerase 3; that stretch reads LTPIQRFFFC…DYPRARLDYT (450 aa). The condensation 7 stretch occupies residues 8164-8504; sequence HFIWKIAGTK…DPTSPLQFAD (341 aa). Residues 8488 to 8500 show a composition bias toward polar residues; that stretch reads AVNSVSSDPTSPL. Positions 8488 to 8515 are disordered; the sequence is AVNSVSSDPTSPLQFADGQDPMPVSHQP.

This sequence belongs to the NRP synthetase family.

In terms of biological role, nonribosomal peptide synthesis (NRPS) is a key mechanism responsible for the biosynthesis of bioactive metabolites which are potentially contributing to organismal virulence. However, contarary to other nonribosomal peptide synthases, NRPS8 does not encode a secreted peptide, but has more a structural role since it is involved in germ tube formation. This is Nonribosomal peptide synthetase 8 (NRPS8) from Aspergillus fumigatus (strain ATCC MYA-4609 / CBS 101355 / FGSC A1100 / Af293) (Neosartorya fumigata).